We begin with the raw amino-acid sequence, 79 residues long: MHARDWFLVFIAIFIPPLAVWLKRGFFTKDLLINFLLFLLGFFPGLIHALYVISCHPYEENEARYSHLSSSDDNYGSLA.

Residues 1–6 (MHARDW) are Cytoplasmic-facing. A helical membrane pass occupies residues 7-27 (FLVFIAIFIPPLAVWLKRGFF). The Vesicular portion of the chain corresponds to 28–32 (TKDLL). Residues 33–53 (INFLLFLLGFFPGLIHALYVI) traverse the membrane as a helical segment. Topologically, residues 54-79 (SCHPYEENEARYSHLSSSDDNYGSLA) are cytoplasmic. Phosphoserine is present on residues Ser71 and Ser77.

This sequence belongs to the UPF0057 (PMP3) family.

The protein localises to the membrane. It is found in the lipid droplet. The protein is Protein SNA2 (SNA2) of Saccharomyces cerevisiae (strain ATCC 204508 / S288c) (Baker's yeast).